Here is a 386-residue protein sequence, read N- to C-terminus: MQVFWFIPTHGDSRYLGTAEGARPLSHDYVKQVAIAADSLGYEGVLIPTGRSCEDPWVVASSLIPVTRRLKFLVAVRPGLHQPSLAARMAASFDRLSGGRLLINLVTGGDRAELEGDGVFLDHAQRYEQSAEFIRIWREILERSHEGGTLDYEGEHLSVKGAKLLFPPLQKPYPPVYFGGSSEAAHDLAAEQVDAYLTWGEPPAEVAKKIADVREKAARHGRSVKFGIRLHVIVRETEDEAWADADRLISRLKDETVVQAQAAFARMDSEGQRRMAALHAGGSRRTRAELEISPNLWAGVGLVRGGAGTALVGDAQTVADRIKEYADLGIDTFVLSGYPHLEEAYRFAELVFPLLPLSVRDRLAGGVGGPLGETVANLYSPRASQS.

This sequence belongs to the SsuD family.

It catalyses the reaction an alkanesulfonate + FMNH2 + O2 = an aldehyde + FMN + sulfite + H2O + 2 H(+). In terms of biological role, catalyzes the desulfonation of aliphatic sulfonates. This chain is Alkanesulfonate monooxygenase, found in Delftia acidovorans (strain DSM 14801 / SPH-1).